The sequence spans 218 residues: 5-oxoprolinase subunit B (218 aa).

The protein belongs to the PxpB family. Forms a complex composed of PxpA, PxpB and PxpC.

The catalysed reaction is 5-oxo-L-proline + ATP + 2 H2O = L-glutamate + ADP + phosphate + H(+). Functionally, catalyzes the cleavage of 5-oxoproline to form L-glutamate coupled to the hydrolysis of ATP to ADP and inorganic phosphate. This chain is 5-oxoprolinase subunit B, found in Escherichia coli O157:H7.